An 84-amino-acid chain; its full sequence is Small ribosomal subunit protein bS16 (84 aa).

This sequence belongs to the bacterial ribosomal protein bS16 family.

The sequence is that of Small ribosomal subunit protein bS16 from Cupriavidus pinatubonensis (strain JMP 134 / LMG 1197) (Cupriavidus necator (strain JMP 134)).